Here is a 303-residue protein sequence, read N- to C-terminus: Proteasome subunit beta (303 aa).

The propeptide at 1–64 (MTWPDRDTSA…VTPSDAVPHG (64 aa)) is removed in mature form; by autocatalysis. The active-site Nucleophile is Thr-65.

The protein belongs to the peptidase T1B family. The 20S proteasome core is composed of 14 alpha and 14 beta subunits that assemble into four stacked heptameric rings, resulting in a barrel-shaped structure. The two inner rings, each composed of seven catalytic beta subunits, are sandwiched by two outer rings, each composed of seven alpha subunits. The catalytic chamber with the active sites is on the inside of the barrel. Has a gated structure, the ends of the cylinder being occluded by the N-termini of the alpha-subunits. Is capped by the proteasome-associated ATPase, ARC.

It localises to the cytoplasm. It carries out the reaction Cleavage of peptide bonds with very broad specificity.. It functions in the pathway protein degradation; proteasomal Pup-dependent pathway. Its activity is regulated as follows. The formation of the proteasomal ATPase ARC-20S proteasome complex, likely via the docking of the C-termini of ARC into the intersubunit pockets in the alpha-rings, may trigger opening of the gate for substrate entry. Interconversion between the open-gate and close-gate conformations leads to a dynamic regulation of the 20S proteasome proteolysis activity. Its function is as follows. Component of the proteasome core, a large protease complex with broad specificity involved in protein degradation. The chain is Proteasome subunit beta from Mycolicibacterium gilvum (strain PYR-GCK) (Mycobacterium gilvum (strain PYR-GCK)).